The chain runs to 262 residues: Ribosomal RNA small subunit methyltransferase A (262 aa).

Positions 13, 15, 40, 61, 85, and 103 each coordinate S-adenosyl-L-methionine.

This sequence belongs to the class I-like SAM-binding methyltransferase superfamily. rRNA adenine N(6)-methyltransferase family. RsmA subfamily.

The protein resides in the cytoplasm. The catalysed reaction is adenosine(1518)/adenosine(1519) in 16S rRNA + 4 S-adenosyl-L-methionine = N(6)-dimethyladenosine(1518)/N(6)-dimethyladenosine(1519) in 16S rRNA + 4 S-adenosyl-L-homocysteine + 4 H(+). Functionally, specifically dimethylates two adjacent adenosines (A1518 and A1519) in the loop of a conserved hairpin near the 3'-end of 16S rRNA in the 30S particle. May play a critical role in biogenesis of 30S subunits. This Bordetella petrii (strain ATCC BAA-461 / DSM 12804 / CCUG 43448) protein is Ribosomal RNA small subunit methyltransferase A.